We begin with the raw amino-acid sequence, 338 residues long: Anthranilate phosphoribosyltransferase (338 aa).

5-phospho-alpha-D-ribose 1-diphosphate contacts are provided by residues Gly78, 81-82 (GD), Thr86, 88-91 (NIST), 106-114 (KHGNRSVSS), and Ser118. Gly78 serves as a coordination point for anthranilate. Ser90 provides a ligand contact to Mg(2+). An anthranilate-binding site is contributed by Asn109. Arg164 serves as a coordination point for anthranilate. Residues Asp223 and Glu224 each coordinate Mg(2+).

This sequence belongs to the anthranilate phosphoribosyltransferase family. In terms of assembly, homodimer. Mg(2+) is required as a cofactor.

It carries out the reaction N-(5-phospho-beta-D-ribosyl)anthranilate + diphosphate = 5-phospho-alpha-D-ribose 1-diphosphate + anthranilate. It functions in the pathway amino-acid biosynthesis; L-tryptophan biosynthesis; L-tryptophan from chorismate: step 2/5. Functionally, catalyzes the transfer of the phosphoribosyl group of 5-phosphorylribose-1-pyrophosphate (PRPP) to anthranilate to yield N-(5'-phosphoribosyl)-anthranilate (PRA). The protein is Anthranilate phosphoribosyltransferase of Bacillus velezensis (strain DSM 23117 / BGSC 10A6 / LMG 26770 / FZB42) (Bacillus amyloliquefaciens subsp. plantarum).